Here is a 215-residue protein sequence, read N- to C-terminus: SAGA complex/transcription factor TFIID complex subunit Taf10 (215 aa).

Residues 1–77 are disordered; that stretch reads MSDINNNEPA…SRERHGSNYV (77 aa). Polar residues predominate over residues 23 to 42; that stretch reads GNNSMSVDEQPETSSTNLPT. Basic and acidic residues predominate over residues 58–73; sequence NNEDSPKSDDSRERHG. Residues 58–203 form the Histone-fold domain; that stretch reads NNEDSPKSDD…VDDLSAALNE (146 aa).

Belongs to the TAF10 family. Component of the 1.8 MDa SAGA (Spt-Ada-Gcn5 acetyltransferase) complex, which is composed of 19 subunits tra1, spt7, taf5, ngg1/ada3, sgf73, spt20, spt8, taf12, taf6, hfi1/ada1, ubp8, gcn5, ada2, spt3, sgf29, taf10, taf9, sgf11 and sus1. The SAGA complex is composed of 4 modules, namely the HAT (histone acetyltransferase) module (gcn5, ada2, ngg1/ada3 and sgf29), the DUB (deubiquitinating) module (ubp8, sgf11, sgf73 and sus1), the core or TAF (TBP-associated factor) module (taf5, taf6, taf9, taf10 and taf12), and the Tra1 or SPT (Suppressor of Ty) module (tra1, hfi1/ada1, spt3, spt7, spt8 and spt20). The Tra1/SPT module binds activators, the core module recruits TBP (TATA-binding protein), the HAT module contains the histone H3 acetyltransferase gcn5, and the DUB module comprises the histone H2B deubiquitinase ubp8. Component of the 1.2 MDa TFIID complex, which is composed of TATA-binding protein (TBP) and the 14 TBP-associated factors (TAFs). It comprises 1 copy of each taf1, taf2, taf3, taf7, taf8, taf11, taf13, 2 copies of each taf4, taf5, taf6, taf9, taf10, taf12, and 3 copies of taf14. In TFIID, taf10 heterodimerizes with taf3 and taf8.

It is found in the nucleus. Functions as a component of both the DNA-binding general transcription initiation factor complex TFIID and the transcription coactivator SAGA complex. Binding of TFIID to a promoter (with or without TATA element) is the initial step in pre-initiation complex (PIC) formation. TFIID plays a key role in the regulation of gene expression by RNA polymerase II through different activities such as transcription activator interaction, core promoter recognition and selectivity, TFIIA and TFIIB interaction, chromatin modification (histone acetylation by TAF1), facilitation of DNA opening and initiation of transcription. SAGA acts as a general cofactor required for essentially all RNA polymerase II transcription. At the promoters, SAGA is required for transcription pre-initiation complex (PIC) recruitment. It influences RNA polymerase II transcriptional activity through different activities such as TBP interaction (via core/TAF module) and promoter selectivity, interaction with transcription activators (via Tra1/SPT module), and chromatin modification through histone acetylation (via HAT module) and deubiquitination (via DUB module). SAGA preferentially acetylates histones H3 (to form H3K9ac, H3K14ac, H3K18ac and H3K23ac) and H2B and deubiquitinates histone H2B. SAGA interacts with DNA via upstream activating sequences (UASs). This Schizosaccharomyces pombe (strain 972 / ATCC 24843) (Fission yeast) protein is SAGA complex/transcription factor TFIID complex subunit Taf10.